The chain runs to 507 residues: tRNA (guanine(10)-N(2))-methyltransferase TRMT11 (507 aa).

The segment covering 459–475 (EKTKKKEQKKKSVENHL) has biased composition (basic and acidic residues). The segment at 459–507 (EKTKKKEQKKKSVENHLKSKNNNDVINNNSNDTNSNNNCNNENNIENQK) is disordered. A compositionally biased stretch (low complexity) spans 480–507 (NNDVINNNSNDTNSNNNCNNENNIENQK).

The protein belongs to the class I-like SAM-binding methyltransferase superfamily. TRM11 methyltransferase family. In terms of assembly, part of the heterodimeric TRMT11-TRM112 methyltransferase complex; this complex forms an active tRNA methyltransferase, where TRMT112 acts as an activator of the catalytic subunit TRMT11.

Its subcellular location is the cytoplasm. The enzyme catalyses guanosine(10) in tRNA + S-adenosyl-L-methionine = N(2)-methylguanosine(10) in tRNA + S-adenosyl-L-homocysteine + H(+). In terms of biological role, catalytic subunit of the TRMT11-TRM112 methyltransferase complex, that specifically mediates the S-adenosyl-L-methionine-dependent N(2)-methylation of guanosine nucleotide at position 10 (m2G10) in tRNAs. This is one of the major tRNA (guanine-N(2))-methyltransferases. In Dictyostelium discoideum (Social amoeba), this protein is tRNA (guanine(10)-N(2))-methyltransferase TRMT11 (trmt11).